Consider the following 438-residue polypeptide: Asparagine--tRNA ligase (438 aa).

Belongs to the class-II aminoacyl-tRNA synthetase family. As to quaternary structure, homodimer.

The protein resides in the cytoplasm. It catalyses the reaction tRNA(Asn) + L-asparagine + ATP = L-asparaginyl-tRNA(Asn) + AMP + diphosphate + H(+). The protein is Asparagine--tRNA ligase of Thermus thermophilus (strain ATCC BAA-163 / DSM 7039 / HB27).